A 410-amino-acid polypeptide reads, in one-letter code: Polyadenylation and cleavage factor homolog 5 (410 aa).

Over residues 1-17 (MASNGSFSAQRNANAGT) the composition is skewed to polar residues. The disordered stretch occupies residues 1–32 (MASNGSFSAQRNANAGTTMKRRNDNRGYGGGI). Residues 191 to 214 (SKELTDLLSLLNNEKEKKTSEASN) adopt a coiled-coil conformation. The C2H2-type zinc finger occupies 247–269 (RQCTSCGVRFKCQEEHSKHMDWH).

As to quaternary structure, forms a complex with cleavage and polyadenylation specificity factor (CPSF) subunits CSTF77, CLPS3, PCFS4 and PCFS1.

The protein resides in the nucleus. This is Polyadenylation and cleavage factor homolog 5 from Arabidopsis thaliana (Mouse-ear cress).